Reading from the N-terminus, the 274-residue chain is Penicillin-insensitive murein endopeptidase (274 aa).

An N-terminal signal peptide occupies residues 1–19 (MNKTAIALLALLASSASLA). 3 disulfide bridges follow: Cys44-Cys265, Cys187-Cys235, and Cys216-Cys223. Zn(2+) contacts are provided by His110, His113, Asp120, Asp147, His150, and His211. The tract at residues 228–264 (LPPPGDGCGAELQSWFAPPKPGTTKPEKKTPSPLPPS) is disordered.

This sequence belongs to the peptidase M74 family. In terms of assembly, dimer. It depends on Zn(2+) as a cofactor.

It localises to the periplasm. Its function is as follows. Murein endopeptidase that cleaves the D-alanyl-meso-2,6-diamino-pimelyl amide bond that connects peptidoglycan strands. Likely plays a role in the removal of murein from the sacculus. This is Penicillin-insensitive murein endopeptidase from Escherichia coli (strain 55989 / EAEC).